Consider the following 475-residue polypeptide: uncharacterized protein (475 aa).

The interval 42 to 292 is disordered; sequence NLQNSLTGKT…NTRKGQRHNN (251 aa). Composition is skewed to basic and acidic residues over residues 59 to 72 and 119 to 134; these read EANH…KSED and IAEK…DDSQ. Polar residues-rich tracts occupy residues 150–159 and 220–242; these read ITPNFTHTPI and NNTF…TSED. Over residues 243 to 263 the composition is skewed to low complexity; that stretch reads SSSQAPHHSSSSGHAPSQQGG. The segment covering 277–289 has biased composition (basic residues); sequence FHHKGRNTRKGQR. The HTH La-type RNA-binding domain maps to 319 to 408; that stretch reads NPYLCDVQAF…MSIKVRRKET (90 aa). Thr408 bears the Phosphothreonine mark. A Phosphoserine modification is found at Ser410.

The protein resides in the cytoplasm. This is an uncharacterized protein from Schizosaccharomyces pombe (strain 972 / ATCC 24843) (Fission yeast).